We begin with the raw amino-acid sequence, 307 residues long: N-acetylglucosaminyl-diphospho-decaprenol L-rhamnosyltransferase (307 aa).

It belongs to the glycosyltransferase 2 family. Mn(2+) is required as a cofactor. Requires Mg(2+) as cofactor.

It carries out the reaction N-acetyl-alpha-D-glucosaminyl-1-diphospho-trans,octa-cis-decaprenol + dTDP-beta-L-rhamnose = alpha-L-rhamnosyl-(1-&gt;3)-N-acetyl-alpha-D-glucosaminyl-diphospho-trans,octa-cis-decaprenol + dTDP + H(+). In terms of biological role, involved in the biosynthesis of the mycolylarabinogalactan-peptidoglycan (mAGP) complex, an essential component of the mycobacterial cell wall. Catalyzes the transfer of the rhamnosyl moiety from dTDP-rhamnosyl (dTDP-Rha) onto the decaprenyl-pyrophosphoryl-GlcNAc (C50-PP-GlcNAc), yielding rhamnosyl-decaprenyl-pyrophosphoryl-GlcNAc (Rha-C50-PP-GlcNAc). The protein is N-acetylglucosaminyl-diphospho-decaprenol L-rhamnosyltransferase (wbbL) of Mycobacterium tuberculosis (strain CDC 1551 / Oshkosh).